Consider the following 121-residue polypeptide: Large ribosomal subunit protein eL31 (121 aa).

This sequence belongs to the eukaryotic ribosomal protein eL31 family.

The polypeptide is Large ribosomal subunit protein eL31 (RPL31) (Perilla frutescens (Beefsteak mint)).